We begin with the raw amino-acid sequence, 180 residues long: Large ribosomal subunit protein uL16 (180 aa).

This sequence belongs to the universal ribosomal protein uL16 family.

In Pyrobaculum aerophilum (strain ATCC 51768 / DSM 7523 / JCM 9630 / CIP 104966 / NBRC 100827 / IM2), this protein is Large ribosomal subunit protein uL16.